The chain runs to 230 residues: Orotidine 5'-phosphate decarboxylase (230 aa).

Residues D11, K34, 61–70 (DLKLHDIPNT), T117, R179, Q188, G208, and R209 contribute to the substrate site. The Proton donor role is filled by K63.

It belongs to the OMP decarboxylase family. Type 1 subfamily. As to quaternary structure, homodimer.

The catalysed reaction is orotidine 5'-phosphate + H(+) = UMP + CO2. The protein operates within pyrimidine metabolism; UMP biosynthesis via de novo pathway; UMP from orotate: step 2/2. In terms of biological role, catalyzes the decarboxylation of orotidine 5'-monophosphate (OMP) to uridine 5'-monophosphate (UMP). In Streptococcus pyogenes serotype M18 (strain MGAS8232), this protein is Orotidine 5'-phosphate decarboxylase.